A 307-amino-acid chain; its full sequence is tRNA dimethylallyltransferase (307 aa).

8-15 (GPTGSGKS) serves as a coordination point for ATP. 10 to 15 (TGSGKS) provides a ligand contact to substrate. The interaction with substrate tRNA stretch occupies residues 33–36 (DSLQ).

It belongs to the IPP transferase family. Monomer. Mg(2+) serves as cofactor.

It carries out the reaction adenosine(37) in tRNA + dimethylallyl diphosphate = N(6)-dimethylallyladenosine(37) in tRNA + diphosphate. In terms of biological role, catalyzes the transfer of a dimethylallyl group onto the adenine at position 37 in tRNAs that read codons beginning with uridine, leading to the formation of N6-(dimethylallyl)adenosine (i(6)A). The polypeptide is tRNA dimethylallyltransferase (Solibacter usitatus (strain Ellin6076)).